A 583-amino-acid chain; its full sequence is 2-succinyl-5-enolpyruvyl-6-hydroxy-3-cyclohexene-1-carboxylate synthase (583 aa).

The protein belongs to the TPP enzyme family. MenD subfamily. As to quaternary structure, homodimer. Mg(2+) is required as a cofactor. Requires Mn(2+) as cofactor. It depends on thiamine diphosphate as a cofactor.

The catalysed reaction is isochorismate + 2-oxoglutarate + H(+) = 5-enolpyruvoyl-6-hydroxy-2-succinyl-cyclohex-3-ene-1-carboxylate + CO2. Its pathway is quinol/quinone metabolism; 1,4-dihydroxy-2-naphthoate biosynthesis; 1,4-dihydroxy-2-naphthoate from chorismate: step 2/7. The protein operates within quinol/quinone metabolism; menaquinone biosynthesis. Functionally, catalyzes the thiamine diphosphate-dependent decarboxylation of 2-oxoglutarate and the subsequent addition of the resulting succinic semialdehyde-thiamine pyrophosphate anion to isochorismate to yield 2-succinyl-5-enolpyruvyl-6-hydroxy-3-cyclohexene-1-carboxylate (SEPHCHC). This Chlorobium limicola (strain DSM 245 / NBRC 103803 / 6330) protein is 2-succinyl-5-enolpyruvyl-6-hydroxy-3-cyclohexene-1-carboxylate synthase.